Consider the following 341-residue polypeptide: UDP-3-O-(3-hydroxymyristoyl)glucosamine N-acyltransferase (341 aa).

The active-site Proton acceptor is His239.

Belongs to the transferase hexapeptide repeat family. LpxD subfamily. As to quaternary structure, homotrimer.

The catalysed reaction is a UDP-3-O-[(3R)-3-hydroxyacyl]-alpha-D-glucosamine + a (3R)-hydroxyacyl-[ACP] = a UDP-2-N,3-O-bis[(3R)-3-hydroxyacyl]-alpha-D-glucosamine + holo-[ACP] + H(+). It carries out the reaction UDP-3-O-[(3R)-3-hydroxytetradecanoyl]-alpha-D-glucosamine + (3R)-hydroxytetradecanoyl-[ACP] = UDP-2-N,3-O-bis[(3R)-3-hydroxytetradecanoyl]-alpha-D-glucosamine + holo-[ACP] + H(+). It participates in glycolipid biosynthesis; lipid IV(A) biosynthesis; lipid IV(A) from (3R)-3-hydroxytetradecanoyl-[acyl-carrier-protein] and UDP-N-acetyl-alpha-D-glucosamine: step 3/6. In terms of biological role, catalyzes the N-acylation of UDP-3-O-(hydroxytetradecanoyl)glucosamine using 3-hydroxytetradecanoyl-ACP as the acyl donor. Is involved in the biosynthesis of lipid A, a phosphorylated glycolipid that anchors the lipopolysaccharide to the outer membrane of the cell. The polypeptide is UDP-3-O-(3-hydroxymyristoyl)glucosamine N-acyltransferase (Salmonella choleraesuis (strain SC-B67)).